The sequence spans 211 residues: Transcriptional regulator NarO (211 aa).

The region spanning 154–205 is the HTH bat-type domain; it reads LTARQREVLETAHEMGYFEHPREANATEVAAALDINRSTFTEHLSAAQSKLL.

Activates transcription of the denitrifying genes (nitrate reductase narA and nitrite reductase nirK) under anaerobic conditions. The chain is Transcriptional regulator NarO from Haloferax volcanii (strain ATCC 29605 / DSM 3757 / JCM 8879 / NBRC 14742 / NCIMB 2012 / VKM B-1768 / DS2) (Halobacterium volcanii).